A 163-amino-acid polypeptide reads, in one-letter code: 2-amino-4-hydroxy-6-hydroxymethyldihydropteridine pyrophosphokinase (163 aa).

Belongs to the HPPK family.

The catalysed reaction is 6-hydroxymethyl-7,8-dihydropterin + ATP = (7,8-dihydropterin-6-yl)methyl diphosphate + AMP + H(+). The protein operates within cofactor biosynthesis; tetrahydrofolate biosynthesis; 2-amino-4-hydroxy-6-hydroxymethyl-7,8-dihydropteridine diphosphate from 7,8-dihydroneopterin triphosphate: step 4/4. In terms of biological role, catalyzes the transfer of pyrophosphate from adenosine triphosphate (ATP) to 6-hydroxymethyl-7,8-dihydropterin, an enzymatic step in folate biosynthesis pathway. The protein is 2-amino-4-hydroxy-6-hydroxymethyldihydropteridine pyrophosphokinase (folK) of Helicobacter pylori (strain ATCC 700392 / 26695) (Campylobacter pylori).